The chain runs to 248 residues: Ribosomal RNA small subunit methyltransferase J (248 aa).

S-adenosyl-L-methionine contacts are provided by residues 98–99, 114–115, 150–151, and aspartate 168; these read RD, ER, and SS.

It belongs to the methyltransferase superfamily. RsmJ family.

It localises to the cytoplasm. The enzyme catalyses guanosine(1516) in 16S rRNA + S-adenosyl-L-methionine = N(2)-methylguanosine(1516) in 16S rRNA + S-adenosyl-L-homocysteine + H(+). Its function is as follows. Specifically methylates the guanosine in position 1516 of 16S rRNA. This chain is Ribosomal RNA small subunit methyltransferase J, found in Shewanella baltica (strain OS185).